Reading from the N-terminus, the 685-residue chain is Glycine--tRNA ligase beta subunit (685 aa).

The protein belongs to the class-II aminoacyl-tRNA synthetase family. In terms of assembly, tetramer of two alpha and two beta subunits.

The protein localises to the cytoplasm. The enzyme catalyses tRNA(Gly) + glycine + ATP = glycyl-tRNA(Gly) + AMP + diphosphate. This is Glycine--tRNA ligase beta subunit from Leuconostoc mesenteroides subsp. mesenteroides (strain ATCC 8293 / DSM 20343 / BCRC 11652 / CCM 1803 / JCM 6124 / NCDO 523 / NBRC 100496 / NCIMB 8023 / NCTC 12954 / NRRL B-1118 / 37Y).